Reading from the N-terminus, the 57-residue chain is Small ribosomal subunit protein bS21 (57 aa).

The segment at 35-57 (REHYEKPSVKRKKKAEAARKKKF) is disordered. Positions 43–57 (VKRKKKAEAARKKKF) are enriched in basic residues.

Belongs to the bacterial ribosomal protein bS21 family.

The polypeptide is Small ribosomal subunit protein bS21 (Alkaliphilus metalliredigens (strain QYMF)).